The sequence spans 1024 residues: Myosin phosphatase Rho-interacting protein (1024 aa).

The interaction with F-actin stretch occupies residues 1–382 (MSAAKENPCR…DRRSTESSMT (382 aa)). The PH 1 domain occupies 43–150 (KPIYGGWLLL…WLEMLMVYPR (108 aa)). The interval 152–262 (NKQNQKKKRK…GDRVDGGRKV (111 aa)) is disordered. The segment covering 179 to 190 (SSSGGSSGSSSS) has biased composition (low complexity). Phosphoserine is present on residues S193, S219, S221, S225, and S227. The span at 221–233 (SPAQSPSQSQPPA) shows a compositional bias: low complexity. Positions 240-262 (PGLESKEDESTISGDRVDGGRKV) are enriched in basic and acidic residues. 4 positions are modified to phosphoserine: S266, S270, S289, and S292. Disordered regions lie at residues 274 to 301 (AKQD…SRRS) and 328 to 379 (PSSD…STES). At T295 the chain carries Phosphothreonine. Basic and acidic residues predominate over residues 333–349 (RQGRSERRAIPRKRDFA). S364 carries the phosphoserine modification. Residues 386–482 (LNFKKGWLTK…WIQTIMKHVL (97 aa)) form the PH 2 domain. The tract at residues 486–583 (APDVTSSLPE…AEPGELERER (98 aa)) is disordered. Positions 488–508 (DVTSSLPEGKNKSTSFETCSR) are enriched in polar residues. Phosphoserine is present on S492. Basic and acidic residues predominate over residues 522–545 (PEQKKSRARERRREGRSKTFDWAE). Residues 545–823 (EFRPIQQALA…SVQRELEVLS (279 aa)) form an interaction with RHOA region. Position 617 is a phosphoserine (S617). Position 645 is a phosphothreonine (T645). The stretch at 672–976 (HELTSLLEKE…AATEALGEKS (305 aa)) forms a coiled coil. S799 carries the phosphoserine modification. An interaction with PPP1R12A region spans residues 823-878 (SEQYSQKCLENAHLAQALEAERQALRQCQRENQELNAHNQELNNRLAAEITRLRTL). The tract at residues 972–995 (LGEKSPEGTTVSGYDIMKSKSNPD) is disordered. Residues S976, G979, S992, S1013, and S1015 each carry the phosphoserine modification.

In terms of assembly, binds RHOA, PPP1R12A/MBS and PPP1R12C/MBS85 through adjacent coiled coil domains. Interacts with MYZAP. Binds F-actin through its N-terminus. Expressed in Kidney, Brain, Heart and Lung.

It is found in the cytoplasm. The protein resides in the cytoskeleton. Functionally, targets myosin phosphatase to the actin cytoskeleton. Required for the regulation of the actin cytoskeleton by RhoA and ROCK1. Depletion leads to an increased number of stress fibers in smooth muscle cells through stabilization of actin fibers by phosphorylated myosin. Overexpression of MRIP as well as its F-actin-binding region leads to disassembly of stress fibers in neuronal cells. This chain is Myosin phosphatase Rho-interacting protein (Mprip), found in Mus musculus (Mouse).